The sequence spans 541 residues: Chaperonin GroEL (541 aa).

Residues 29–32, 86–90, Gly-413, 480–482, and Asp-496 each bind ATP; these read TLGP, DGTTT, and NAA.

The protein belongs to the chaperonin (HSP60) family. As to quaternary structure, forms a cylinder of 14 subunits composed of two heptameric rings stacked back-to-back. Interacts with the co-chaperonin GroES.

It is found in the cytoplasm. It catalyses the reaction ATP + H2O + a folded polypeptide = ADP + phosphate + an unfolded polypeptide.. In terms of biological role, together with its co-chaperonin GroES, plays an essential role in assisting protein folding. The GroEL-GroES system forms a nano-cage that allows encapsulation of the non-native substrate proteins and provides a physical environment optimized to promote and accelerate protein folding. This chain is Chaperonin GroEL, found in Gardnerella vaginalis.